The primary structure comprises 536 residues: CTP synthase (536 aa).

An amidoligase domain region spans residues 1 to 267 (MSKFVFVTGG…CKETLRCLDL (267 aa)). Position 13 (Ser-13) interacts with CTP. Ser-13 provides a ligand contact to UTP. Residues 14–19 (SIGKGI) and Asp-71 contribute to the ATP site. Residues Asp-71 and Glu-141 each coordinate Mg(2+). Residues 148 to 150 (DIE), 188 to 193 (KTKPTQ), and Lys-224 each bind CTP. Residues 188–193 (KTKPTQ) and Lys-224 contribute to the UTP site. The 243-residue stretch at 292–534 (KVALVGKYIE…IKASREKLEQ (243 aa)) folds into the Glutamine amidotransferase type-1 domain. Residue Gly-354 coordinates L-glutamine. The active-site Nucleophile; for glutamine hydrolysis is the Cys-381. L-glutamine contacts are provided by residues 382–385 (LGMQ), Glu-405, and Arg-462. Residues His-507 and Glu-509 contribute to the active site.

Belongs to the CTP synthase family. As to quaternary structure, homotetramer.

It carries out the reaction UTP + L-glutamine + ATP + H2O = CTP + L-glutamate + ADP + phosphate + 2 H(+). It catalyses the reaction L-glutamine + H2O = L-glutamate + NH4(+). The enzyme catalyses UTP + NH4(+) + ATP = CTP + ADP + phosphate + 2 H(+). It functions in the pathway pyrimidine metabolism; CTP biosynthesis via de novo pathway; CTP from UDP: step 2/2. Its activity is regulated as follows. Allosterically activated by GTP, when glutamine is the substrate; GTP has no effect on the reaction when ammonia is the substrate. The allosteric effector GTP functions by stabilizing the protein conformation that binds the tetrahedral intermediate(s) formed during glutamine hydrolysis. Inhibited by the product CTP, via allosteric rather than competitive inhibition. In terms of biological role, catalyzes the ATP-dependent amination of UTP to CTP with either L-glutamine or ammonia as the source of nitrogen. Regulates intracellular CTP levels through interactions with the four ribonucleotide triphosphates. The sequence is that of CTP synthase from Prochlorococcus marinus (strain MIT 9515).